The sequence spans 395 residues: S-adenosylmethionine synthase (395 aa).

ATP is bound at residue H15. D17 lines the Mg(2+) pocket. E43 contributes to the K(+) binding site. E56 and Q99 together coordinate L-methionine. The flexible loop stretch occupies residues 99 to 109; it reads QSPDIAMGVDE. Residues 173–175, 239–240, D248, 254–255, A271, and K275 contribute to the ATP site; these read DGK, RF, and RK. D248 is a binding site for L-methionine. K279 contributes to the L-methionine binding site.

It belongs to the AdoMet synthase family. In terms of assembly, homotetramer; dimer of dimers. It depends on Mg(2+) as a cofactor. K(+) is required as a cofactor.

The protein localises to the cytoplasm. It catalyses the reaction L-methionine + ATP + H2O = S-adenosyl-L-methionine + phosphate + diphosphate. Its pathway is amino-acid biosynthesis; S-adenosyl-L-methionine biosynthesis; S-adenosyl-L-methionine from L-methionine: step 1/1. In terms of biological role, catalyzes the formation of S-adenosylmethionine (AdoMet) from methionine and ATP. The overall synthetic reaction is composed of two sequential steps, AdoMet formation and the subsequent tripolyphosphate hydrolysis which occurs prior to release of AdoMet from the enzyme. This chain is S-adenosylmethionine synthase, found in Desulforudis audaxviator (strain MP104C).